We begin with the raw amino-acid sequence, 80 residues long: Defensin-like protein 51 (80 aa).

The first 27 residues, 1-27 (MGFTKILVTFFLVGLLVISSSPQNAIA), serve as a signal peptide directing secretion. Intrachain disulfides connect cysteine 39-cysteine 79, cysteine 43-cysteine 66, cysteine 52-cysteine 77, and cysteine 56-cysteine 78.

Belongs to the DEFL family.

It is found in the secreted. In Arabidopsis thaliana (Mouse-ear cress), this protein is Defensin-like protein 51 (LCR48).